Here is a 190-residue protein sequence, read N- to C-terminus: MDQSSNLTGKMLIAMPGMRDPRFEQSVILICAHSEDGAMGLVVNRPLPEIGFSDLLAQLGIQAGANALDIPVRFGGPVEPGRGFVLHRAPREIELDENRMRITDDLAMSTTRDILEDFARGLGPQPAMLALGYAGWGPGQLDSEIRENGWLTSDRGDEIIFGAEDAGKWRAALKSLGIDPLMLSPDAGHA.

This sequence belongs to the UPF0301 (AlgH) family.

The protein is UPF0301 protein Pden_0436 of Paracoccus denitrificans (strain Pd 1222).